We begin with the raw amino-acid sequence, 675 residues long: Acyl-coenzyme A oxidase 3, peroxisomal (675 aa).

The N-terminal 34 residues, methionine 1 to cysteine 34, are a transit peptide targeting the peroxisome. Position 442-457 (alanine 442–leucine 457) interacts with FAD.

Belongs to the acyl-CoA oxidase family. FAD is required as a cofactor. Most abundant in flowers and senescing rosette leaves. Lower expression in hypocotyls, stems, young rosette leaves, cotyledons, cauline leaves and root tip of young seedlings.

Its subcellular location is the peroxisome. It carries out the reaction a 2,3-saturated acyl-CoA + O2 = a (2E)-enoyl-CoA + H2O2. Its pathway is lipid metabolism; peroxisomal fatty acid beta-oxidation. Catalyzes the desaturation of medium-chain acyl-CoAs to 2-trans-enoyl-CoAs. Active on C8:0- to C14:0-CoA with a maximal activity on C12:0-CoA. This Arabidopsis thaliana (Mouse-ear cress) protein is Acyl-coenzyme A oxidase 3, peroxisomal (ACX3).